Consider the following 226-residue polypeptide: UPF0758 protein LL1007 (226 aa).

One can recognise an MPN domain in the interval 103–225; sequence QVLSSREYGL…YFSFREEEIR (123 aa). The Zn(2+) site is built by H174, H176, and D187. The JAMM motif motif lies at 174–187; it reads HNHPSGNLKPSQAD.

It belongs to the UPF0758 family.

In Lactococcus lactis subsp. lactis (strain IL1403) (Streptococcus lactis), this protein is UPF0758 protein LL1007.